Reading from the N-terminus, the 132-residue chain is Small ribosomal subunit protein uS11 (132 aa).

Belongs to the universal ribosomal protein uS11 family. In terms of assembly, part of the 30S ribosomal subunit. Interacts with proteins S7 and S18. Binds to IF-3.

Its function is as follows. Located on the platform of the 30S subunit, it bridges several disparate RNA helices of the 16S rRNA. Forms part of the Shine-Dalgarno cleft in the 70S ribosome. The protein is Small ribosomal subunit protein uS11 of Legionella pneumophila (strain Corby).